The primary structure comprises 1705 residues: Homeobox-DDT domain protein RLT1 (1705 aa).

Disordered stretches follow at residues 1-53, 118-167, 237-267, 296-322, and 352-414; these read MEMG…QLET, ELPA…EYET, HDPRPRRSHAAARSFHEQQSLDDPSSFTPNM, GPVPRSYVTPGHASRNCSTSQQDMPSP, and GVRK…RKEE. The homeobox DNA-binding region spans 39-98; sequence VKPKRQMKTPFQLETLEKVYSEEKYPSEATRAELSEKLDLSDRQLQMWFCHRRLKDKKDG. Positions 136–159 are enriched in low complexity; sequence GSESGCSPYSNSRRNFASGSSSSR. Polar residues-rich tracts occupy residues 253-265 and 310-319; these read EQQSLDDPSSFTP and RNCSTSQQDM. Positions 549–608 constitute a DDT domain; the sequence is DETVGNLLMVWRFLISFSDVLDLWPFTLDEFIQAFHDYDSRLLGEIHVTLLRSIIRDVED. Residues 731–800 form the HTH HARE-type domain; sequence GTVKFAAFHV…APSTYCVRAP (70 aa). Disordered regions lie at residues 1028-1053, 1198-1229, 1441-1502, 1561-1635, and 1652-1705; these read TRERDSFDRDPSQLLDETKPLEDLSN, VNHSPTDSVSPSSSAISGSNSDSMETSTSIRV, PEDE…KAQS, PKSE…FVDY, and AIEE…SSDS. Over residues 1201 to 1220 the composition is skewed to low complexity; the sequence is SPTDSVSPSSSAISGSNSDS. The span at 1455-1465 shows a compositional bias: basic and acidic residues; it reads SPFKGKGPREQ. Composition is skewed to acidic residues over residues 1565-1574, 1611-1628, and 1669-1684; these read EVEEDEEEEE, VDDESDNSVGVESEDEDG, and GEDDAEMSESSEDDDV.

In terms of assembly, interacts with CHR11 and CHR17. Interacts (via the DDT domain) with CHR11 (via C-terminus). In terms of tissue distribution, highly expressed in growing tissues such as inflorescence and flower meristems, young leaves and floral organs. Expressed in roots, rosette and cauline leaves, stems, flowers, inflorescences and siliques.

The protein resides in the nucleus. Transcriptional regulator required for the maintenance of the plant vegetative phase. In association with CHR11 or CHR17 may prevent the early activation of the vegetative-to-reproductive transition by regulating key genes that contribute to flower timing, such as FT, SEP1, SEP3, AGL8/FUL, SOC1 and FLC. The polypeptide is Homeobox-DDT domain protein RLT1 (Arabidopsis thaliana (Mouse-ear cress)).